A 492-amino-acid chain; its full sequence is 2,3-bisphosphoglycerate-independent phosphoglycerate mutase (492 aa).

The Mn(2+) site is built by D11 and S61. The Phosphoserine intermediate role is filled by S61. Residues H118, 147-148, R177, R183, 248-251, and K321 contribute to the substrate site; these read RD and RSDR. Mn(2+)-binding residues include D387, H391, D428, H429, and H446.

The protein belongs to the BPG-independent phosphoglycerate mutase family. In terms of assembly, monomer. Mn(2+) serves as cofactor.

It catalyses the reaction (2R)-2-phosphoglycerate = (2R)-3-phosphoglycerate. Its pathway is carbohydrate degradation; glycolysis; pyruvate from D-glyceraldehyde 3-phosphate: step 3/5. Catalyzes the interconversion of 2-phosphoglycerate and 3-phosphoglycerate. This Wolinella succinogenes (strain ATCC 29543 / DSM 1740 / CCUG 13145 / JCM 31913 / LMG 7466 / NCTC 11488 / FDC 602W) (Vibrio succinogenes) protein is 2,3-bisphosphoglycerate-independent phosphoglycerate mutase.